The following is a 460-amino-acid chain: MNTNQNDENIEKQPSQRGLKNRHIQLIAIAGTIGTGLFLGAGKSIHLTGPSIIFVYLIIGALMYILLRAIGEMLYQDPSQHSFLNFVSRYMGAKPGYFIQWSYLLVVVFVAMAELIAIGTYINFWLPDLPIWMTEVFVLVLLTLLNTLNPKFFGETEFWFGMIKIVAIIGLILTAIILIFSHYHTGTDTVSLTNITKGFEFFPNGVSSFFESFQMVMFAFVSMEFIGMTAAETDNPRPTLKKAINQIPIRIVLFYIGALLAIMSIYQWRDIPADKSPFVTIFQLIGIKWAAALVNFVVLTSAASALNSALFSITRNLYSLSQLNDDKILKPFTKFSKAGVPVNALLFTSLLILFTPFISMIPAISNSFVFITSVATNLFLVVYLMTLITYLKYRKSKDFDPSGFTLPAAHIFIPLAIAGFVLIFISLFCFKDTIIPAIGSVIWVLIFGLFTFFRKIKTAD.

The next 12 membrane-spanning stretches (helical) occupy residues 26-46 (LIAI…KSIH), 47-67 (LTGP…YILL), 98-118 (FIQW…LIAI), 124-144 (FWLP…LLTL), 160-180 (FGMI…ILIF), 209-229 (FFES…IGMT), 246-266 (QIPI…MSIY), 278-298 (FVTI…NFVV), 344-364 (ALLF…IPAI), 368-388 (FVFI…MTLI), 410-430 (HIFI…LFCF), and 433-453 (TIIP…FTFF).

Belongs to the amino acid-polyamine-organocation (APC) superfamily. Amino acid transporter (AAT) (TC 2.A.3.1) family.

It localises to the cell membrane. Functionally, transports DL-alanine, DL-serine and glycine. The preferred substrate is DL-alanine. L-serine is a low-affinity substrate. In Lactococcus lactis subsp. cremoris (strain MG1363), this protein is DL-alanine permease SerP2.